Here is a 232-residue protein sequence, read N- to C-terminus: Phosphatidylserine decarboxylase proenzyme (232 aa).

Serine 201 functions as the Schiff-base intermediate with substrate; via pyruvic acid in the catalytic mechanism. The residue at position 201 (serine 201) is a Pyruvic acid (Ser); by autocatalysis.

This sequence belongs to the phosphatidylserine decarboxylase family. PSD-A subfamily. In terms of assembly, heterodimer of a large membrane-associated beta subunit and a small pyruvoyl-containing alpha subunit. Pyruvate serves as cofactor. In terms of processing, is synthesized initially as an inactive proenzyme. Formation of the active enzyme involves a self-maturation process in which the active site pyruvoyl group is generated from an internal serine residue via an autocatalytic post-translational modification. Two non-identical subunits are generated from the proenzyme in this reaction, and the pyruvate is formed at the N-terminus of the alpha chain, which is derived from the carboxyl end of the proenzyme. The post-translation cleavage follows an unusual pathway, termed non-hydrolytic serinolysis, in which the side chain hydroxyl group of the serine supplies its oxygen atom to form the C-terminus of the beta chain, while the remainder of the serine residue undergoes an oxidative deamination to produce ammonia and the pyruvoyl prosthetic group on the alpha chain.

Its subcellular location is the cell membrane. It catalyses the reaction a 1,2-diacyl-sn-glycero-3-phospho-L-serine + H(+) = a 1,2-diacyl-sn-glycero-3-phosphoethanolamine + CO2. It participates in phospholipid metabolism; phosphatidylethanolamine biosynthesis; phosphatidylethanolamine from CDP-diacylglycerol: step 2/2. Functionally, catalyzes the formation of phosphatidylethanolamine (PtdEtn) from phosphatidylserine (PtdSer). In Mycolicibacterium smegmatis (strain ATCC 700084 / mc(2)155) (Mycobacterium smegmatis), this protein is Phosphatidylserine decarboxylase proenzyme.